The primary structure comprises 453 residues: Ribulose bisphosphate carboxylase large chain (453 aa).

Positions 1–2 (MS) are excised as a propeptide. At Pro-3 the chain carries N-acetylproline. At Lys-14 the chain carries N6,N6,N6-trimethyllysine. The substrate site is built by Asn-123 and Thr-173. The active-site Proton acceptor is Lys-175. Lys-177 contributes to the substrate binding site. Positions 201, 203, and 204 each coordinate Mg(2+). Residue Lys-201 is modified to N6-carboxylysine. The active-site Proton acceptor is the His-294. Substrate contacts are provided by Arg-295, His-327, and Ser-379.

The protein belongs to the RuBisCO large chain family. Type I subfamily. In terms of assembly, heterohexadecamer of 8 large chains and 8 small chains; disulfide-linked. The disulfide link is formed within the large subunit homodimers. It depends on Mg(2+) as a cofactor. Post-translationally, the disulfide bond which can form in the large chain dimeric partners within the hexadecamer appears to be associated with oxidative stress and protein turnover.

Its subcellular location is the plastid. It localises to the chloroplast. The enzyme catalyses 2 (2R)-3-phosphoglycerate + 2 H(+) = D-ribulose 1,5-bisphosphate + CO2 + H2O. The catalysed reaction is D-ribulose 1,5-bisphosphate + O2 = 2-phosphoglycolate + (2R)-3-phosphoglycerate + 2 H(+). RuBisCO catalyzes two reactions: the carboxylation of D-ribulose 1,5-bisphosphate, the primary event in carbon dioxide fixation, as well as the oxidative fragmentation of the pentose substrate in the photorespiration process. Both reactions occur simultaneously and in competition at the same active site. In Cruciata glabra (Slender crosswort), this protein is Ribulose bisphosphate carboxylase large chain.